Here is a 272-residue protein sequence, read N- to C-terminus: MSTPTTPPRDAWARLRALTPARIALGRAGTSLPTASHLEFQLAHAQARDAVHLAFDPAPLQAVLQQRGRRSVLLHSAASDRHLYLQRPDLGRRLSDEAAEQLRGTTAVHGGGADLAVVVADGLSALAVHRHAGAMLEQIDALAAHEGWSLAPVTLIAQGRVAIGDEVGELLQARAVIVLIGERPGLSSPDSLGLYLTYAPRVGHTDAARNCISNIRGEGLSYAEAGHKLGYLLREAFRRKLSGVQLKDEADRPLLGTDTASQAAPRNFLLPE.

Positions 161, 182, and 211 each coordinate adenosylcob(III)alamin.

This sequence belongs to the EutC family. As to quaternary structure, the basic unit is a heterodimer which dimerizes to form tetramers. The heterotetramers trimerize; 6 large subunits form a core ring with 6 small subunits projecting outwards. Adenosylcob(III)alamin serves as cofactor.

The protein resides in the bacterial microcompartment. The enzyme catalyses ethanolamine = acetaldehyde + NH4(+). Its pathway is amine and polyamine degradation; ethanolamine degradation. Functionally, catalyzes the deamination of various vicinal amino-alcohols to oxo compounds. Allows this organism to utilize ethanolamine as the sole source of nitrogen and carbon in the presence of external vitamin B12. In Xanthomonas campestris pv. campestris (strain ATCC 33913 / DSM 3586 / NCPPB 528 / LMG 568 / P 25), this protein is Ethanolamine ammonia-lyase small subunit.